The sequence spans 616 residues: General alpha-glucoside permease (616 aa).

At Met-1 to Thr-115 the chain is on the cytoplasmic side. The segment covering Ser-15–Arg-27 has biased composition (basic and acidic residues). Residues Ser-15–Asp-40 are disordered. The chain crosses the membrane as a helical span at residues Thr-116 to Phe-136. The Extracellular segment spans residues Gln-137–Asn-160. Residues Met-161–Met-181 traverse the membrane as a helical segment. Topologically, residues Gly-182–Leu-191 are cytoplasmic. A helical transmembrane segment spans residues Gly-192–Val-212. Topologically, residues Gly-213–Gln-214 are extracellular. Residues Ile-215–Val-235 form a helical membrane-spanning segment. The Cytoplasmic segment spans residues Cys-236 to Tyr-242. A helical membrane pass occupies residues Tyr-243–Met-263. Topologically, residues Lys-264–Lys-278 are extracellular. Residues Leu-279–Pro-299 traverse the membrane as a helical segment. Over Glu-300–Cys-373 the chain is Cytoplasmic. The helical transmembrane segment at Leu-374–Phe-394 threads the bilayer. Over Glu-395 to Ala-404 the chain is Extracellular. The helical transmembrane segment at Phe-405–Ile-425 threads the bilayer. Topologically, residues Ser-426–Thr-433 are cytoplasmic. A helical transmembrane segment spans residues Ile-434 to Phe-454. At Gly-455 to Gly-466 the chain is on the extracellular side. Residues Leu-467–Val-487 traverse the membrane as a helical segment. Topologically, residues Ala-488 to Arg-504 are cytoplasmic. A helical membrane pass occupies residues Ile-505–Ser-525. At Asp-526–Lys-532 the chain is on the extracellular side. A helical transmembrane segment spans residues Thr-533–Pro-553. Residues Glu-554–Cys-616 are Cytoplasmic-facing. The disordered stretch occupies residues Gly-587–Cys-616. Over residues Lys-606–Cys-616 the composition is skewed to basic and acidic residues.

Belongs to the major facilitator superfamily. Sugar transporter (TC 2.A.1.1) family.

It is found in the cell membrane. High-affinity uptake of alpha-glucosides such as maltose, turanose, isomaltose, alpha-methylglucoside, maltotriose, palatinose, trehalose, melezitose and glucose. Acts with the concomitant transport of protons into the cell (symport system). Provides an alternative and minor mechanism for growth on trehalose carbon source by transporting trehalose into the cytoplasm for conversion to glucose by neutral trehalase NTH1. This chain is General alpha-glucoside permease, found in Saccharomyces cerevisiae (strain CEN.PK113-7D) (Baker's yeast).